A 141-amino-acid chain; its full sequence is Large ribosomal subunit protein uL16 (141 aa).

Residues 1-17 (MLMPKRTKFRKQMKGRN) are compositionally biased toward basic residues. The interval 1 to 22 (MLMPKRTKFRKQMKGRNRGYAT) is disordered.

The protein belongs to the universal ribosomal protein uL16 family. As to quaternary structure, part of the 50S ribosomal subunit.

Binds 23S rRNA and is also seen to make contacts with the A and possibly P site tRNAs. This Campylobacter curvus (strain 525.92) protein is Large ribosomal subunit protein uL16.